The chain runs to 141 residues: HTH-type transcriptional repressor NsrR (141 aa).

In terms of domain architecture, HTH rrf2-type spans 2–129 (QLTSFTDYGL…DNYTLADLVE (128 aa)). A DNA-binding region (H-T-H motif) is located at residues 28–51 (ISQVTEVYGVSRNHMVKIINQLSR). [2Fe-2S] cluster-binding residues include cysteine 91, cysteine 96, and cysteine 102.

Requires [2Fe-2S] cluster as cofactor.

Its function is as follows. Nitric oxide-sensitive repressor of genes involved in protecting the cell against nitrosative stress. May require iron for activity. The sequence is that of HTH-type transcriptional repressor NsrR from Enterobacter sp. (strain 638).